Reading from the N-terminus, the 444-residue chain is Methylenetetrahydrofolate--tRNA-(uracil-5-)-methyltransferase TrmFO (444 aa).

Residue G9–G14 coordinates FAD.

Belongs to the MnmG family. TrmFO subfamily. The cofactor is FAD.

The protein localises to the cytoplasm. It carries out the reaction uridine(54) in tRNA + (6R)-5,10-methylene-5,6,7,8-tetrahydrofolate + NADH + H(+) = 5-methyluridine(54) in tRNA + (6S)-5,6,7,8-tetrahydrofolate + NAD(+). The enzyme catalyses uridine(54) in tRNA + (6R)-5,10-methylene-5,6,7,8-tetrahydrofolate + NADPH + H(+) = 5-methyluridine(54) in tRNA + (6S)-5,6,7,8-tetrahydrofolate + NADP(+). Functionally, catalyzes the folate-dependent formation of 5-methyl-uridine at position 54 (M-5-U54) in all tRNAs. The sequence is that of Methylenetetrahydrofolate--tRNA-(uracil-5-)-methyltransferase TrmFO from Cereibacter sphaeroides (strain ATCC 17025 / ATH 2.4.3) (Rhodobacter sphaeroides).